A 439-amino-acid chain; its full sequence is Adenylosuccinate synthetase (439 aa).

Residues 25–31 (GDEGKGK), 53–55 (GHT), and lysine 62 each bind GTP. The active-site Proton acceptor is aspartate 26. Mg(2+) is bound by residues aspartate 26 and glycine 53. IMP-binding positions include 26–29 (DEGK) and 51–54 (NAGH). Histidine 54 acts as the Proton donor in catalysis. Positions 141, 155, 232, and 247 each coordinate IMP. Threonine 307 is a binding site for GTP. 307–313 (TTTNRPR) lines the substrate pocket. Arginine 311 provides a ligand contact to IMP. Residues arginine 313, 339–341 (KLD), and 425–427 (GVG) contribute to the GTP site.

The protein belongs to the adenylosuccinate synthetase family. As to quaternary structure, homodimer. Mg(2+) serves as cofactor.

Its subcellular location is the cytoplasm. It carries out the reaction IMP + L-aspartate + GTP = N(6)-(1,2-dicarboxyethyl)-AMP + GDP + phosphate + 2 H(+). It functions in the pathway purine metabolism; AMP biosynthesis via de novo pathway; AMP from IMP: step 1/2. Plays an important role in the salvage pathway for purine nucleotide biosynthesis. Catalyzes the first committed step in the biosynthesis of AMP from IMP. The sequence is that of Adenylosuccinate synthetase from Plasmodium yoelii yoelii.